Here is a 255-residue protein sequence, read N- to C-terminus: 4-hydroxy-tetrahydrodipicolinate reductase (255 aa).

Residues Gly-9 to Met-14, Gly-89 to Thr-91, and Ala-115 to Phe-118 contribute to the NAD(+) site. The active-site Proton donor/acceptor is the His-145. His-146 serves as a coordination point for (S)-2,3,4,5-tetrahydrodipicolinate. Lys-149 acts as the Proton donor in catalysis. Position 155-156 (Gly-155–Thr-156) interacts with (S)-2,3,4,5-tetrahydrodipicolinate.

This sequence belongs to the DapB family.

The protein localises to the cytoplasm. It carries out the reaction (S)-2,3,4,5-tetrahydrodipicolinate + NAD(+) + H2O = (2S,4S)-4-hydroxy-2,3,4,5-tetrahydrodipicolinate + NADH + H(+). The enzyme catalyses (S)-2,3,4,5-tetrahydrodipicolinate + NADP(+) + H2O = (2S,4S)-4-hydroxy-2,3,4,5-tetrahydrodipicolinate + NADPH + H(+). It participates in amino-acid biosynthesis; L-lysine biosynthesis via DAP pathway; (S)-tetrahydrodipicolinate from L-aspartate: step 4/4. In terms of biological role, catalyzes the conversion of 4-hydroxy-tetrahydrodipicolinate (HTPA) to tetrahydrodipicolinate. The sequence is that of 4-hydroxy-tetrahydrodipicolinate reductase from Streptococcus thermophilus (strain CNRZ 1066).